A 1153-amino-acid polypeptide reads, in one-letter code: MMDNQSKPSIIPSYEWYERSINRVEDSSSSINNVSSKLVFFFIIGEMKDLKIPQNTRLLLSTKHYILPMIHLEDKQKETINFPSKKVRIIFGYFNNSNKEGEITLFLDTELEKSHNLNITNKHINNDQPLKGLSKNFNSLSLLLQSLQRNYNASLLTFDKSTNTTIKQLPPPLPQPQPQPHQQQPHNKKQIDDIELKKKKEIEEIDEIEDFESTQPLVVDEVDDNYDDIDNNNNNNNNSNNDDDKLEDIEEHNEEEEDQIHLFTHAHSLTQKPQLPKKQQQSFDEFQRKIKDNKSPQKLKLQQQQQQQQQQKQSKHFDAFEEELLEQQKIHEHKLQQQQQIKPQKQQLQQPQQQPQQQPQQQPQQQPQQQPQQQPQQQQKQQQKQQPTPKKIINSLQLNNVNNNNNNNNNNNNNNNNNNNNNNKNKKEIMPGWLEKAILSNSFPLNPCGQIVSLPEDSHKKKNISLYLSDNICYIQIIVSENTVREALENKKNVFNFGFLFGCVIEILDYTIKPDQDFSKFVLNINKFVILNKNKHSPISPTPISKHPRVISLLRIKKDMNKNASNNIGNNIIYSESLISSDQLEILNSLELWNLPTQITKQLSLQDLTEGNLSMLDSTNDGSSQEYEEEEEEEKNQKNFEKEEEGENIQMRQLYEKYREEHQSQVKKQQIIQKLKQQQQQQQQQQQEKEKQQQEKQQDEEMSDFENIQNLMEEVQKSDDNNNNNDNNNNNNNNQTSKRKRLNEFESDPDDIYDLLESNTFAGHQVKGVDENKKLRVDSEDQQTKKLTTTTTTTTTTTNTNNNNNNNNSGIDSGTKTIEDDNQLDEDFFDGLNYSIIASSGGSNNNNNNDQNDSITTKEKERSETIKTHNEDEKKNSLSFIKFENPIPSNNPITTTVTTTSASPKITEIPKQPYAIKPSISSYSIRPTLPTKPSLIKSLNNNNNNNNNNNINNINNIGNKNTTVNNSNHSNHSNNNINNNNIFKNSNPIVDTNFSSTTKTDEAQQSKIFTGNQLPKSPINNENVVNNNNNNEINNTTTTTTNNNSGIHKNNNNYNSDNSDNSDDGLKQEKEEQKEEQKENKNNNNNNNNNNNNNNNNNNNNNNNEVLNFSFSLTSSSGTNVKKTIPILLADYSCTSVIQEGGFEIIVKRKENK.

Disordered regions lie at residues 164–193 (TTIK…QIDD), 224–245 (DNYD…DDDK), 294–316 (KSPQ…QSKH), 332–427 (EHKL…KNKK), 613–648 (LSML…EGEN), 683–703 (QQQQ…EEMS), 717–740 (KSDD…SKRK), 772–819 (NKKL…KTIE), 838–874 (ASSG…EDEK), and 942–1106 (NNNN…NNEV). Positions 169 to 179 (LPPPLPQPQPQ) are enriched in pro residues. Low complexity-rich tracts occupy residues 231–240 (NNNNNNNNSN), 298–312 (KLKL…QQQK), 336–391 (QQQQ…TPKK), and 399–423 (NNVN…NNNN). Positions 613–625 (LSMLDSTNDGSSQ) are enriched in polar residues. Residues 687-699 (QEKEKQQQEKQQD) are compositionally biased toward basic and acidic residues. A compositionally biased stretch (low complexity) spans 721–734 (NNNNNDNNNNNNNN). The span at 772-784 (NKKLRVDSEDQQT) shows a compositional bias: basic and acidic residues. Composition is skewed to low complexity over residues 788–808 (TTTT…NNNN) and 839–854 (SSGG…QNDS). Residues 856–874 (TTKEKERSETIKTHNEDEK) show a composition bias toward basic and acidic residues. Over residues 942-987 (NNNNNNNNNINNINNIGNKNTTVNNSNHSNHSNNNINNNNIFKNSN) the composition is skewed to low complexity. Composition is skewed to polar residues over residues 988-998 (PIVDTNFSSTT) and 1005-1015 (QSKIFTGNQLP). A compositionally biased stretch (low complexity) spans 1019 to 1059 (INNENVVNNNNNNEINNTTTTTTNNNSGIHKNNNNYNSDNS). Over residues 1064 to 1081 (DGLKQEKEEQKEEQKENK) the composition is skewed to basic and acidic residues. Residues 1082-1105 (NNNNNNNNNNNNNNNNNNNNNNNE) are compositionally biased toward low complexity.

This is an uncharacterized protein from Dictyostelium discoideum (Social amoeba).